Consider the following 349-residue polypeptide: Eukaryotic translation initiation factor 3 subunit I (349 aa).

WD repeat units lie at residues 8-49 (GHER…GTLE), 51-91 (HIGT…QSWE), 93-135 (PTPV…DYTK), 148-187 (SDAK…FIET), 197-239 (EKIA…KVYK), and 295-336 (GHFG…FEFD).

Belongs to the eIF-3 subunit I family. Component of the eukaryotic translation initiation factor 3 (eIF-3) complex.

The protein resides in the cytoplasm. Its function is as follows. Component of the eukaryotic translation initiation factor 3 (eIF-3) complex, which is involved in protein synthesis of a specialized repertoire of mRNAs and, together with other initiation factors, stimulates binding of mRNA and methionyl-tRNAi to the 40S ribosome. The eIF-3 complex specifically targets and initiates translation of a subset of mRNAs involved in cell proliferation. This is Eukaryotic translation initiation factor 3 subunit I from Debaryomyces hansenii (strain ATCC 36239 / CBS 767 / BCRC 21394 / JCM 1990 / NBRC 0083 / IGC 2968) (Yeast).